A 424-amino-acid chain; its full sequence is UDP-N-acetylglucosamine 1-carboxyvinyltransferase (424 aa).

Residue 22-23 (KN) participates in phosphoenolpyruvate binding. Arg96 serves as a coordination point for UDP-N-acetyl-alpha-D-glucosamine. The active-site Proton donor is Cys120. The residue at position 120 (Cys120) is a 2-(S-cysteinyl)pyruvic acid O-phosphothioketal. Residues 125–129 (RPVDQ), Asp312, and Ile334 contribute to the UDP-N-acetyl-alpha-D-glucosamine site.

This sequence belongs to the EPSP synthase family. MurA subfamily.

Its subcellular location is the cytoplasm. It carries out the reaction phosphoenolpyruvate + UDP-N-acetyl-alpha-D-glucosamine = UDP-N-acetyl-3-O-(1-carboxyvinyl)-alpha-D-glucosamine + phosphate. Its pathway is cell wall biogenesis; peptidoglycan biosynthesis. Cell wall formation. Adds enolpyruvyl to UDP-N-acetylglucosamine. This chain is UDP-N-acetylglucosamine 1-carboxyvinyltransferase, found in Polynucleobacter asymbioticus (strain DSM 18221 / CIP 109841 / QLW-P1DMWA-1) (Polynucleobacter necessarius subsp. asymbioticus).